Reading from the N-terminus, the 349-residue chain is T-cell immunoglobulin and mucin domain-containing protein 2 (349 aa).

The signal sequence occupies residues 1 to 20 (MVQLQVFISGLLLLLPGAVA). The Extracellular portion of the chain corresponds to 21–275 (SYTVVQGHSV…QKLQRNPTKG (255 aa)). The Ig-like V-type domain occupies 22 to 123 (YTVVQGHSVT…AFYFVDYLLE (102 aa)). 3 cysteine pairs are disulfide-bonded: Cys34/Cys107, Cys48/Cys59, and Cys54/Cys106. Asn84 and Asn89 each carry an N-linked (GlcNAc...) asparagine glycan. A disordered region spans residues 128–271 (LPTSPPTRPT…AIPPQKLQRN (144 aa)). The span at 136–215 (PTNTGRPTTT…TSTPPTPEQT (80 aa)) shows a compositional bias: low complexity. Residues 222–260 (ATTYYPDQTTAEVTEAPSHTPTDWNNTATSSDDSWNSDT) show a composition bias toward polar residues. Residues 276–296 (FYVGMSFAALLLLLLASTVAI) form a helical membrane-spanning segment. The Cytoplasmic segment spans residues 297-349 (TRYMVMRKNSGSLRFVAFPVSKIGASQNKVVEQARIEDEVYIIEDSPYFEEES).

It belongs to the immunoglobulin superfamily. TIM family. In terms of assembly, homodimer.

The protein localises to the cell membrane. In terms of biological role, probable receptor for SEMA4A involved in the regulation of T-cell function. The interaction with SEMA4A enhances T-cell activation. The sequence is that of T-cell immunoglobulin and mucin domain-containing protein 2 (Timd2) from Rattus norvegicus (Rat).